We begin with the raw amino-acid sequence, 421 residues long: Serine/threonine-protein kinase OXI1 (421 aa).

The region spanning 17–329 (LEVLSLLGRG…VEEIKGHDFF (313 aa)) is the Protein kinase domain. ATP is bound by residues 23 to 31 (LGRGAKGVV) and Lys45. The Proton acceptor role is filled by Asp149. Positions 167-246 (DFDLSTNLAP…VGTEEYVAPE (80 aa)) are activation loop. Position 235 is a phosphoserine; by PDPK1 (Ser235). Residues 330 to 421 (RGVDWEKVIL…LESDNNFLVF (92 aa)) form the AGC-kinase C-terminal domain. Positions 418–421 (FLVF) match the PIF motif.

It belongs to the protein kinase superfamily. AGC Ser/Thr protein kinase family. As to quaternary structure, interacts with PDK1 and PDK2. In terms of tissue distribution, expressed in roots and root hair cells.

The enzyme catalyses L-seryl-[protein] + ATP = O-phospho-L-seryl-[protein] + ADP + H(+). The catalysed reaction is L-threonyl-[protein] + ATP = O-phospho-L-threonyl-[protein] + ADP + H(+). Activated in response to hydrogen peroxide and cellulase elicitor. Activated by PDK1 in a phosphatidic acid dependent manner. Involved in oxidative burst-mediated signaling. Required for basal resistance to P.parasitica infection and root hair growth. Partly required for the activation of MPK3 and MPK6 by hydrogen peroxide and cellulase elicitor. The protein is Serine/threonine-protein kinase OXI1 of Arabidopsis thaliana (Mouse-ear cress).